The following is a 96-amino-acid chain: ESAT-6-like protein SAG1039 (96 aa).

The protein belongs to the WXG100 family. sagEsxA-like subfamily. In terms of assembly, homodimer.

The polypeptide is ESAT-6-like protein SAG1039 (Streptococcus agalactiae serotype V (strain ATCC BAA-611 / 2603 V/R)).